Here is a 338-residue protein sequence, read N- to C-terminus: Glycerol-3-phosphate dehydrogenase [NAD(P)+] (338 aa).

NADPH contacts are provided by Ser-13, Trp-14, and Lys-108. Positions 108, 139, and 141 each coordinate sn-glycerol 3-phosphate. An NADPH-binding site is contributed by Ala-143. Positions 194, 247, 257, 258, and 259 each coordinate sn-glycerol 3-phosphate. Lys-194 (proton acceptor) is an active-site residue. Arg-258 contacts NADPH. Val-282 and Glu-284 together coordinate NADPH.

It belongs to the NAD-dependent glycerol-3-phosphate dehydrogenase family.

Its subcellular location is the cytoplasm. It catalyses the reaction sn-glycerol 3-phosphate + NAD(+) = dihydroxyacetone phosphate + NADH + H(+). It carries out the reaction sn-glycerol 3-phosphate + NADP(+) = dihydroxyacetone phosphate + NADPH + H(+). It participates in membrane lipid metabolism; glycerophospholipid metabolism. Its function is as follows. Catalyzes the reduction of the glycolytic intermediate dihydroxyacetone phosphate (DHAP) to sn-glycerol 3-phosphate (G3P), the key precursor for phospholipid synthesis. This Streptococcus pneumoniae serotype 19F (strain G54) protein is Glycerol-3-phosphate dehydrogenase [NAD(P)+].